Here is a 188-residue protein sequence, read N- to C-terminus: Peptidyl-tRNA hydrolase (188 aa).

Phe15 lines the tRNA pocket. Residue His20 is the Proton acceptor of the active site. Positions 64, 66, and 112 each coordinate tRNA.

This sequence belongs to the PTH family. Monomer.

The protein resides in the cytoplasm. The enzyme catalyses an N-acyl-L-alpha-aminoacyl-tRNA + H2O = an N-acyl-L-amino acid + a tRNA + H(+). Its function is as follows. Hydrolyzes ribosome-free peptidyl-tRNAs (with 1 or more amino acids incorporated), which drop off the ribosome during protein synthesis, or as a result of ribosome stalling. Functionally, catalyzes the release of premature peptidyl moieties from peptidyl-tRNA molecules trapped in stalled 50S ribosomal subunits, and thus maintains levels of free tRNAs and 50S ribosomes. In Borreliella afzelii (strain PKo) (Borrelia afzelii), this protein is Peptidyl-tRNA hydrolase.